The following is a 417-amino-acid chain: Serine--tRNA ligase (417 aa).

232–234 (TSE) contacts L-serine. 263–265 (RKE) contributes to the ATP binding site. An L-serine-binding site is contributed by Glu286. 350–353 (EISS) contributes to the ATP binding site. Ser385 provides a ligand contact to L-serine.

Belongs to the class-II aminoacyl-tRNA synthetase family. Type-1 seryl-tRNA synthetase subfamily. As to quaternary structure, homodimer. The tRNA molecule binds across the dimer.

The protein localises to the cytoplasm. The enzyme catalyses tRNA(Ser) + L-serine + ATP = L-seryl-tRNA(Ser) + AMP + diphosphate + H(+). It catalyses the reaction tRNA(Sec) + L-serine + ATP = L-seryl-tRNA(Sec) + AMP + diphosphate + H(+). It participates in aminoacyl-tRNA biosynthesis; selenocysteinyl-tRNA(Sec) biosynthesis; L-seryl-tRNA(Sec) from L-serine and tRNA(Sec): step 1/1. Functionally, catalyzes the attachment of serine to tRNA(Ser). Is also able to aminoacylate tRNA(Sec) with serine, to form the misacylated tRNA L-seryl-tRNA(Sec), which will be further converted into selenocysteinyl-tRNA(Sec). This Campylobacter hominis (strain ATCC BAA-381 / DSM 21671 / CCUG 45161 / LMG 19568 / NCTC 13146 / CH001A) protein is Serine--tRNA ligase.